The following is a 492-amino-acid chain: Catalase isozyme C (492 aa).

Arginine 62 contributes to the heme binding site. Histidine 65 is a catalytic residue. Arginine 102 is a binding site for heme. Asparagine 138 is an active-site residue. Phenylalanine 151 lines the heme pocket. Tyrosine 210 carries the post-translational modification Phosphotyrosine; by STRK1. Positions 325–348 (CPGIIVPGIYYSDDKLLQTRIFSY) form a cross-link, 3-(S-cysteinyl)-tyrosine (Cys-Tyr). Arginine 344, tyrosine 348, and arginine 355 together coordinate heme. The Peroxisome targeting signal motif lies at 484 to 492 (SRLSAKPSM).

Belongs to the catalase family. Homotetramer. Interacts with GLO1 and GLO4; these interactions are disturbed by alpha-hydroxy-2-pyridinemethanesulfonic acid (HPMS) and salicylic acid (SA). Interacts with STRK1 at the plasma membrane. Heme serves as cofactor. In terms of processing, activated by STRK1-mediated phosphorylation at Tyr-210 upon salt and oxidative stress. Highly expressed in mature leaves. Mainly expressed in leaf blades, stems, panicles, leaf sheaths, and culms, but barely in roots.

It localises to the peroxisome. The protein resides in the glyoxysome. Its subcellular location is the cell membrane. It catalyses the reaction 2 H2O2 = O2 + 2 H2O. Strongly inhibited by beta-mercaptoethanol, sodium azide and potassium cyanide. Slightly repressed by 3-amino-1,2,4-triazole (3-AT). Activity is repressed proportionally to increased concentration of NaCl, KCl, LiCl and MgCl(2). Its function is as follows. Occurs in almost all aerobically respiring organisms and serves to protect cells from the toxic effects of hydrogen peroxide. Responsible for the redox homeostasis in leaves. Prevents nitric oxide (NO) accumulation and subsequent NO-mediated leaf cell death as well as the S-nitrosylation of specific proteins (e.g. glyceraldehyde 3-phosphate dehydrogenase and thioredoxin) by degrading H(2)O(2). Involved in photorespiration. Promotes drought stress tolerance and recovery. Involved in NO-mediated enhanced tolerance to zinc oxide nanoparticles (ZnO NPs)-induced phytotoxicity. Participates in melatonin-mediated detoxification. The polypeptide is Catalase isozyme C (Oryza sativa subsp. japonica (Rice)).